We begin with the raw amino-acid sequence, 311 residues long: tRNA-cytidine(32) 2-sulfurtransferase (311 aa).

The short motif at 47–52 (SGGKDS) is the PP-loop motif element. Positions 122, 125, and 213 each coordinate [4Fe-4S] cluster.

It belongs to the TtcA family. As to quaternary structure, homodimer. It depends on Mg(2+) as a cofactor. [4Fe-4S] cluster is required as a cofactor.

It localises to the cytoplasm. The catalysed reaction is cytidine(32) in tRNA + S-sulfanyl-L-cysteinyl-[cysteine desulfurase] + AH2 + ATP = 2-thiocytidine(32) in tRNA + L-cysteinyl-[cysteine desulfurase] + A + AMP + diphosphate + H(+). Its pathway is tRNA modification. Its function is as follows. Catalyzes the ATP-dependent 2-thiolation of cytidine in position 32 of tRNA, to form 2-thiocytidine (s(2)C32). The sulfur atoms are provided by the cysteine/cysteine desulfurase (IscS) system. This is tRNA-cytidine(32) 2-sulfurtransferase from Klebsiella pneumoniae (strain 342).